We begin with the raw amino-acid sequence, 688 residues long: Sciellin (688 aa).

A compositionally biased stretch (polar residues) spans 1–25 (MSNVTLRKMSPTGNEMKSTTQGTTR). The disordered stretch occupies residues 1 to 29 (MSNVTLRKMSPTGNEMKSTTQGTTRKQQD). K83 carries the post-translational modification N6-acetyllysine. Residues 134 to 231 (QPGGSLNANT…TNRSAERNIR (98 aa)) are disordered. Over residues 140 to 154 (NANTSNTIASTSATT) the composition is skewed to low complexity. Pro residues predominate over residues 186 to 195 (VHPPIPPKPS). Repeat copies occupy residues 251 to 266 (GEEL…SLNR), 267 to 286 (NQGL…REKR), 287 to 306 (AKSL…DGKG), 307 to 326 (IQSL…NEKG), 327 to 346 (RQNL…TSRR), 347 to 366 (SEDL…NTTG), 367 to 386 (KKDL…NITR), 387 to 406 (GQSL…SNQG), 407 to 426 (SKDL…STEG), 427 to 446 (GQSL…TNQG), 447 to 465 (NQDL…KSSE), 466 to 484 (QGLD…NTDG), 485 to 504 (KQDL…NNQR), 505 to 523 (NQDL…RNNQ), 524 to 543 (SQDL…NTNR), and 544 to 563 (DQNL…NKNG). The interval 251-563 (GEELDNLIKM…NSHVSENKNG (313 aa)) is 16 X approximate tandem repeats. S289 is subject to Phosphoserine. The interval 340–373 (MNKTSRRSEDLDNATEVNPKGHENTTGKKDLDGL) is disordered. The segment covering 358-373 (PKGHENTTGKKDLDGL) has biased composition (basic and acidic residues). S389 is subject to Phosphoserine. Residues 619 to 685 (DMCTYCRKPL…EPCYSKIMAK (67 aa)) enclose the LIM zinc-binding domain.

In terms of tissue distribution, highly expressed in esophagus. It is also expressed in keratinocytes, amniotic tissue, foreskin stratum spinosum and stratum granulosum, hair follicle and nail.

The protein localises to the cytoplasm. It localises to the membrane. May function in the assembly or regulation of proteins in the cornified envelope. The LIM domain may be involved in homotypic or heterotypic associations and may function to localize sciellin to the cornified envelope. In Homo sapiens (Human), this protein is Sciellin (SCEL).